A 236-amino-acid polypeptide reads, in one-letter code: MSNQQNDAKRAAARRVIQDFVFDGMTLGLGSGTTSHFFVRELGQHVAKGLQLTCTTTSRATSEVARDVGIELSDPNEMNEIDLTIDGPDEIDRRFNMIKGGGACLLWEKIIAHASKRMICICDETKIVNCLGQFPLPVEIVPFAWKQTERRVERVLAEQGLHHVPIIRRMGGGHPVITDSGNFILDCHCGAIITAPEPLEIELNRIPGVVENGLFTREATGMVVGYFDGSSYVQLR.

Substrate contacts are provided by residues 31 to 34 (SGTT), 86 to 89 (DGPD), and 99 to 102 (KGGG). The active-site Proton acceptor is Glu108. Residue Lys126 coordinates substrate.

The protein belongs to the ribose 5-phosphate isomerase family. Homodimer.

The enzyme catalyses aldehydo-D-ribose 5-phosphate = D-ribulose 5-phosphate. Its pathway is carbohydrate degradation; pentose phosphate pathway; D-ribose 5-phosphate from D-ribulose 5-phosphate (non-oxidative stage): step 1/1. In terms of biological role, catalyzes the reversible conversion of ribose-5-phosphate to ribulose 5-phosphate. The sequence is that of Ribose-5-phosphate isomerase A 2 from Yersinia pestis.